Consider the following 143-residue polypeptide: MIIHTKYHGQMNIKEEQIILFESGIPGFLEEKQFVILPLSEDSPFVALQSVTSENLAFIVVSPFIFFKNYEFDLDESTAELLDIDNIQDVEVMTILTMAEPFEKSTANLLAPIIVNRKNMMAKQVVLHDSSYTTKHPIGGESC.

The protein belongs to the FliW family. Interacts with flagellin in a 1:1 complex. Two molecules interact with each CsrA dimer; cannot interact with both flagellin and CsrA simultaneously. Has a higher affinity for CsrA than for flagellin. Interacts directly with flagellin (hag), forms a 3-way complex of Hag, FliS and FliW in which Flis and FliW do not directly interact. Interaction with Hag may occur via the C-terminus of Hag.

The protein localises to the cytoplasm. In terms of biological role, acts as an anti-CsrA protein, binds CsrA and prevents it from repressing translation of its target genes, one of which is flagellin. Binds to flagellin (hag), which is implicated in polymerization, and participates in the assembly of the flagellum. An antagonist to translational regulator CsrA, it binds CsrA at an allosteric site and non-competitively inhibits CsrA binding to hag RNA. Partner switching by flagellin between FliW and CsrA provides a flagellar assembly checkpoint to tightly control the timing of flagellin synthesis. Flagellin binds to assembly factor FliW, freeing translation regulator CsrA to repress translation of the flagellin mRNA. When the flagellar hook is assembled flagellin is secreted, depleting intracellular flagellin, which frees FliW to interact with CsrA and inhibits CsrA binding to mRNA. This derepresses flagellin translation and provides protein for flagellar assembly. Once the flagellar filament is completed cytoplasmic flagellin levels rise and CsrA translation repression of flagellin reinitiates. Binds to CsrA and displaces it from hag mRNA. Binds to hag mRNA itself, but only at much higher concentrations than those required to displace CsrA. The sequence is that of Flagellar assembly factor FliW from Bacillus subtilis (strain 168).